A 1016-amino-acid chain; its full sequence is Mastermind-like protein 1 (1016 aa).

Positions 1 to 123 (MVLPTCPMAE…NLDSATSPQN (123 aa)) are required for interaction with NOTCH proteins. A Phosphoserine modification is found at Ser-45. 5 disordered regions span residues 65-184 (QAKA…LGLD), 263-487 (PDED…PSHV), 561-617 (KPKP…SQQQ), 658-681 (EKQQFQRHLTRPPPQYQDPTQGSF), and 796-953 (AYGQ…GGRA). Positions 67–76 (KAKRAGKHRQ) are enriched in basic residues. The segment covering 93 to 115 (DAADGPEHGRPATHLHDTVKRNL) has biased composition (basic and acidic residues). A compositionally biased stretch (polar residues) spans 116-129 (DSATSPQNGDQQNG). The residue at position 120 (Ser-120) is a Phosphoserine. Positions 263–282 (PDEDMKDLFNEDFEEKKDPE) are enriched in basic and acidic residues. The segment covering 283-292 (SSGSATQTPL) has biased composition (polar residues). A phosphoserine mark is found at Ser-303 and Ser-314. Positions 322–353 (AGQTFLGPSSAPVSTDSPSLGGSQTLFHTSGQ) are enriched in polar residues. Residue Ser-360 is modified to Phosphoserine. Polar residues predominate over residues 392 to 403 (ELSSAHQLQQIA). Residues 413 to 426 (QNPQQATPAPAPGQ) show a composition bias toward low complexity. 4 stretches are compositionally biased toward polar residues: residues 427-439 (MSTWQQTGPSHSS), 451-463 (SPSSYKQDFTNSK), 577-595 (QEQNPSSVPVQAQATSVGT), and 602-617 (VASSHNSSPYLSSQQQ). Residues 801 to 810 (SLGSSGLSQQ) show a composition bias toward low complexity. Lys-822 is modified (N6-acetyllysine). The segment covering 834 to 885 (GQNSSWQHQGMPNLSGQTPGNSNVSPFTAASSFHMQQQAHLKMSSPQFSQAV) has biased composition (polar residues). Ser-1015 is modified (phosphoserine).

This sequence belongs to the mastermind family. In terms of assembly, interacts (via N-terminus) with NOTCH1, NOTCH2, NOTCH3 and NOTCH4 (via ankyrin repeat region). Interacts (via N-terminus) with p53 (via DNA-binding region). Forms a DNA-binding complex with Notch proteins and RBPSUH/RBP-J kappa/CBF1. Also binds CREBBP/CBP and CDK8. Forms a complex with PRAG1, NOTCH1 and MAML1, in a MAML1-dependent manner. Widely expressed with highest levels in heart, pancreas, peripheral blood leukocytes and spleen.

The protein localises to the nucleus speckle. Its function is as follows. Acts as a transcriptional coactivator for NOTCH proteins. Has been shown to amplify NOTCH-induced transcription of HES1. Enhances phosphorylation and proteolytic turnover of the NOTCH intracellular domain in the nucleus through interaction with CDK8. Binds to CREBBP/CBP which promotes nucleosome acetylation at NOTCH enhancers and activates transcription. Induces phosphorylation and localization of CREBBP to nuclear foci. Plays a role in hematopoietic development by regulating NOTCH-mediated lymphoid cell fate decisions. The protein is Mastermind-like protein 1 of Homo sapiens (Human).